Here is a 187-residue protein sequence, read N- to C-terminus: MKMQANQIRPGQVLEHQGKRWTVLKIQLIQPGKGGAFIAVEMRDVDSGNKTNERWRTADTVERLEVREIDCQYLFKDDTGYTFMDKETFEQFSMAADALGEQAGFLQESMEVTVDCIEGSPVSVNLPSQVILQVVEADAVVKGQTASSSYKPGLLENGMKVMIPPFIEAGTRIVVSTVDCSYIERAK.

This sequence belongs to the elongation factor P family.

It localises to the cytoplasm. Its pathway is protein biosynthesis; polypeptide chain elongation. Functionally, involved in peptide bond synthesis. Stimulates efficient translation and peptide-bond synthesis on native or reconstituted 70S ribosomes in vitro. Probably functions indirectly by altering the affinity of the ribosome for aminoacyl-tRNA, thus increasing their reactivity as acceptors for peptidyl transferase. This chain is Elongation factor P, found in Rhodospirillum rubrum (strain ATCC 11170 / ATH 1.1.1 / DSM 467 / LMG 4362 / NCIMB 8255 / S1).